Here is a 252-residue protein sequence, read N- to C-terminus: Indole-3-glycerol phosphate synthase (252 aa).

Belongs to the TrpC family.

The catalysed reaction is 1-(2-carboxyphenylamino)-1-deoxy-D-ribulose 5-phosphate + H(+) = (1S,2R)-1-C-(indol-3-yl)glycerol 3-phosphate + CO2 + H2O. It participates in amino-acid biosynthesis; L-tryptophan biosynthesis; L-tryptophan from chorismate: step 4/5. This Listeria monocytogenes serotype 4a (strain HCC23) protein is Indole-3-glycerol phosphate synthase.